Here is a 207-residue protein sequence, read N- to C-terminus: Holliday junction branch migration complex subunit RuvA (207 aa).

Positions Met1–Asn65 are domain I. Residues Gln66–Gln143 form a domain II region. Positions Asn144–Pro158 are flexible linker. The domain III stretch occupies residues Ser159 to Ile207.

This sequence belongs to the RuvA family. In terms of assembly, homotetramer. Forms an RuvA(8)-RuvB(12)-Holliday junction (HJ) complex. HJ DNA is sandwiched between 2 RuvA tetramers; dsDNA enters through RuvA and exits via RuvB. An RuvB hexamer assembles on each DNA strand where it exits the tetramer. Each RuvB hexamer is contacted by two RuvA subunits (via domain III) on 2 adjacent RuvB subunits; this complex drives branch migration. In the full resolvosome a probable DNA-RuvA(4)-RuvB(12)-RuvC(2) complex forms which resolves the HJ.

The protein resides in the cytoplasm. Its function is as follows. The RuvA-RuvB-RuvC complex processes Holliday junction (HJ) DNA during genetic recombination and DNA repair, while the RuvA-RuvB complex plays an important role in the rescue of blocked DNA replication forks via replication fork reversal (RFR). RuvA specifically binds to HJ cruciform DNA, conferring on it an open structure. The RuvB hexamer acts as an ATP-dependent pump, pulling dsDNA into and through the RuvAB complex. HJ branch migration allows RuvC to scan DNA until it finds its consensus sequence, where it cleaves and resolves the cruciform DNA. This Proteus mirabilis (strain HI4320) protein is Holliday junction branch migration complex subunit RuvA.